The sequence spans 349 residues: Anthranilate phosphoribosyltransferase (349 aa).

5-phospho-alpha-D-ribose 1-diphosphate is bound by residues glycine 82, 85-86, 92-95, 110-118, and serine 122; these read GD, NVSS, and KHGNRAVSG. An anthranilate-binding site is contributed by glycine 82. Position 94 (serine 94) interacts with Mg(2+). An anthranilate-binding site is contributed by asparagine 113. Arginine 168 serves as a coordination point for anthranilate. Mg(2+) contacts are provided by aspartate 227 and glutamate 228.

This sequence belongs to the anthranilate phosphoribosyltransferase family. Homodimer. It depends on Mg(2+) as a cofactor.

The catalysed reaction is N-(5-phospho-beta-D-ribosyl)anthranilate + diphosphate = 5-phospho-alpha-D-ribose 1-diphosphate + anthranilate. Its pathway is amino-acid biosynthesis; L-tryptophan biosynthesis; L-tryptophan from chorismate: step 2/5. In terms of biological role, catalyzes the transfer of the phosphoribosyl group of 5-phosphorylribose-1-pyrophosphate (PRPP) to anthranilate to yield N-(5'-phosphoribosyl)-anthranilate (PRA). The sequence is that of Anthranilate phosphoribosyltransferase from Pseudomonas paraeruginosa (strain DSM 24068 / PA7) (Pseudomonas aeruginosa (strain PA7)).